A 196-amino-acid chain; its full sequence is Holliday junction branch migration complex subunit RuvA (196 aa).

A domain I region spans residues 1 to 63 (MLDFIKGEIV…EETHQLFGFI (63 aa)). Residues 64-142 (DKKERQLFTH…PDNIPSSDTI (79 aa)) are domain II. The segment at 143-146 (ITNI) is flexible linker. Residues 146–196 (ISSNITKEAITALITLGFSQSASQKVVNKIVSNNSSSTTIEQIIKKALKLL) form a domain III region.

It belongs to the RuvA family. In terms of assembly, homotetramer. Forms an RuvA(8)-RuvB(12)-Holliday junction (HJ) complex. HJ DNA is sandwiched between 2 RuvA tetramers; dsDNA enters through RuvA and exits via RuvB. An RuvB hexamer assembles on each DNA strand where it exits the tetramer. Each RuvB hexamer is contacted by two RuvA subunits (via domain III) on 2 adjacent RuvB subunits; this complex drives branch migration. In the full resolvosome a probable DNA-RuvA(4)-RuvB(12)-RuvC(2) complex forms which resolves the HJ.

It is found in the cytoplasm. Functionally, the RuvA-RuvB-RuvC complex processes Holliday junction (HJ) DNA during genetic recombination and DNA repair, while the RuvA-RuvB complex plays an important role in the rescue of blocked DNA replication forks via replication fork reversal (RFR). RuvA specifically binds to HJ cruciform DNA, conferring on it an open structure. The RuvB hexamer acts as an ATP-dependent pump, pulling dsDNA into and through the RuvAB complex. HJ branch migration allows RuvC to scan DNA until it finds its consensus sequence, where it cleaves and resolves the cruciform DNA. The polypeptide is Holliday junction branch migration complex subunit RuvA (Azobacteroides pseudotrichonymphae genomovar. CFP2).